We begin with the raw amino-acid sequence, 327 residues long: tRNA uridine(34) hydroxylase (327 aa).

Positions 130-224 (LDEDTVVLDT…YGKDPEVQGE (95 aa)) constitute a Rhodanese domain. The active-site Cysteine persulfide intermediate is the C184.

Belongs to the TrhO family.

It carries out the reaction uridine(34) in tRNA + AH2 + O2 = 5-hydroxyuridine(34) in tRNA + A + H2O. Catalyzes oxygen-dependent 5-hydroxyuridine (ho5U) modification at position 34 in tRNAs. In Streptococcus thermophilus (strain CNRZ 1066), this protein is tRNA uridine(34) hydroxylase.